The following is a 379-amino-acid chain: Cytochrome b (379 aa).

Helical transmembrane passes span 33-53 (FGSL…FLAM), 77-98 (WTIR…FIHV), 113-133 (WNVG…GYVL), and 178-198 (FFAL…IHLL). The heme b site is built by His83 and His97. Residues His182 and His196 each coordinate heme b. His201 contributes to the a ubiquinone binding site. 4 helical membrane passes run 226-246 (TKDF…ALFY), 288-308 (LGGV…PFLQ), 320-340 (LSQF…WIGG), and 347-367 (FINI…FIMP).

The protein belongs to the cytochrome b family. As to quaternary structure, the cytochrome bc1 complex contains 11 subunits: 3 respiratory subunits (MT-CYB, CYC1 and UQCRFS1), 2 core proteins (UQCRC1 and UQCRC2) and 6 low-molecular weight proteins (UQCRH/QCR6, UQCRB/QCR7, UQCRQ/QCR8, UQCR10/QCR9, UQCR11/QCR10 and a cleavage product of UQCRFS1). This cytochrome bc1 complex then forms a dimer. Heme b is required as a cofactor.

The protein resides in the mitochondrion inner membrane. In terms of biological role, component of the ubiquinol-cytochrome c reductase complex (complex III or cytochrome b-c1 complex) that is part of the mitochondrial respiratory chain. The b-c1 complex mediates electron transfer from ubiquinol to cytochrome c. Contributes to the generation of a proton gradient across the mitochondrial membrane that is then used for ATP synthesis. This chain is Cytochrome b (MT-CYB), found in Lepilemur dorsalis (Grey-backed sportive lemur).